The chain runs to 705 residues: Kinesin-like protein KIF2A (705 aa).

The segment at 1–216 is globular; sequence MATANFGKIQ…LDYRPLTTAD (216 aa). The interval 65 to 186 is disordered; that stretch reads DLVPDEDIEP…QELREKRAQD (122 aa). Phosphoserine is present on Ser75. Thr96 is modified (phosphothreonine). Lys101 carries the post-translational modification N6-acetyllysine. The span at 122 to 139 shows a compositional bias: polar residues; it reads LPEQSSSAQQNGSVSDIS. Ser134 and Ser139 each carry phosphoserine. Basic and acidic residues predominate over residues 158-186; it reads CVKEVEKLQEKREKRRLQQQELREKRAQD. The region spanning 222-552 is the Kinesin motor domain; the sequence is RICVCVRKRP…LRYANRVKEL (331 aa). 312 to 319 is a binding site for ATP; it reads GQTGSGKT. Phosphoserine is present on residues Thr528 and Tyr545. The stretch at 659 to 698 forms a coiled coil; sequence ATQLEAILEQKIDILTELRDKVKSFRAALQEEEQASKQIN.

The protein belongs to the TRAFAC class myosin-kinesin ATPase superfamily. Kinesin family. MCAK/KIF2 subfamily. As to quaternary structure, interacts with AURKA and PLK1. Interacts with PSRC1. Interacts with MCRS1; the interaction enhances recruitment of KIF2A to the minus ends of spindle microtubules which promotes chromosome alignment. In terms of tissue distribution, highest level in lung. High level in ovary, moderate levels in heart, kidney, placenta, skeletal muscle and spleen (at protein level). Pancreas and spleen express a shorter isoform (at protein level). Expressed in the flagellum of elongated spermatids and sperm in the testis lumen (at protein level). Isoform 1 expressed in neuronal cells. Isoform 2 expressed in astrocytes and fibroblasts.

The protein resides in the cytoplasm. The protein localises to the cytoskeleton. Its subcellular location is the microtubule organizing center. It localises to the centrosome. It is found in the spindle pole. The protein resides in the spindle. The protein localises to the lysosome. Functionally, plus end-directed microtubule-dependent motor required for normal brain development. May regulate microtubule dynamics during axonal growth. Required for normal progression through mitosis. Required for normal congress of chromosomes at the metaphase plate. Required for normal spindle dynamics during mitosis. Promotes spindle turnover. Implicated in formation of bipolar mitotic spindles. Has microtubule depolymerization activity. The protein is Kinesin-like protein KIF2A (Kif2a) of Mus musculus (Mouse).